A 160-amino-acid chain; its full sequence is MSNYEIMILANPDSTLEQVSELLFSVLKKSDTKIEKLERSELAYPIHKLTRATYYLVTVKSDPQLMAELTRKLNIAKFILRSLIINLDSEKGLKPRKVKRFIPRAKNNDRSANQGDRRPFIRRNQTTDASKTEASTEATASKQSEQTTTKPRTRKVSKEQ.

Residues 96–160 are disordered; it reads RKVKRFIPRA…PRTRKVSKEQ (65 aa). The segment covering 126–145 has biased composition (low complexity); sequence TTDASKTEASTEATASKQSE. The span at 151-160 shows a compositional bias: basic residues; it reads PRTRKVSKEQ.

This sequence belongs to the bacterial ribosomal protein bS6 family.

In terms of biological role, binds together with bS18 to 16S ribosomal RNA. In Metamycoplasma arthritidis (strain 158L3-1) (Mycoplasma arthritidis), this protein is Small ribosomal subunit protein bS6.